Here is a 431-residue protein sequence, read N- to C-terminus: GDP-L-galactose phosphorylase 2 (431 aa).

Histidine 235 serves as the catalytic Tele-GMP-histidine intermediate. Residues 398-407 (EEEEEEELEE) show a composition bias toward acidic residues. A disordered region spans residues 398–417 (EEEEEEELEEQNSMNGGSFT).

The protein belongs to the GDPGP1 family. In terms of assembly, interacts with TLP1. As to expression, expressed in leaves, stems, roots, flowers and siliques.

It localises to the cytoplasm. The protein resides in the nucleus. The catalysed reaction is GDP-beta-L-galactose + phosphate = beta-L-galactose 1-phosphate + GDP + H(+). It participates in cofactor biosynthesis; L-ascorbate biosynthesis via GDP-alpha-D-mannose pathway; L-ascorbate from GDP-alpha-D-mannose: step 2/5. Catalyzes a reaction of the Smirnoff-Wheeler pathway, the major route to ascorbate biosynthesis in plants. Acts as a phosphorylase rather than as a transferase. Uses preferentially GDP-L-galactose and GDP-D-glucose as substrates. Lower activity with GDP-L-fucose, very low activity with GDP-D-mannose, and no activity with UDP-D-glucose, UDP-D-galactose or ADP-D-glucose. Highly specific for inorganic phosphate as the guanylyl acceptor. The protein is GDP-L-galactose phosphorylase 2 (VTC5) of Arabidopsis thaliana (Mouse-ear cress).